Reading from the N-terminus, the 345-residue chain is NADPH dehydrogenase (345 aa).

Ser23–Cys26 contacts FMN. Position 28 (Tyr28) interacts with substrate. FMN is bound by residues Ala60 and Gln102. His164–His167 contributes to the substrate binding site. FMN is bound by residues Arg215 and Gly307–Arg308.

This sequence belongs to the NADH:flavin oxidoreductase/NADH oxidase family. NamA subfamily. As to quaternary structure, homotetramer. The cofactor is FMN.

It carries out the reaction A + NADPH + H(+) = AH2 + NADP(+). In terms of biological role, catalyzes the reduction of the double bond of an array of alpha,beta-unsaturated aldehydes and ketones. It also reduces the nitro group of nitroester and nitroaromatic compounds. It could have a role in detoxification processes. In Bacillus anthracis (strain CDC 684 / NRRL 3495), this protein is NADPH dehydrogenase.